The sequence spans 346 residues: Heterogeneous nuclear ribonucleoprotein A1 (346 aa).

2 RRM domains span residues 23-123 (RKIF…GVRE) and 114-191 (KRLY…KGLS). Basic and acidic residues-rich tracts occupy residues 92–107 (TVDP…KNRS) and 189–215 (GLSK…RDGQ). Disordered regions lie at residues 92 to 111 (TVDP…ESNV) and 189 to 346 (GLSK…NRNY). 2 stretches are compositionally biased toward gly residues: residues 216-296 (RGGY…GWGG) and 303-331 (GGWG…GGQS). Over residues 332–346 (GAQQWAHAQGGNRNY) the composition is skewed to low complexity.

The protein localises to the nucleus. The protein resides in the chromosome. It is found in the telomere. This protein is a component of ribonucleosomes. Overexpression gradually increases telomere length, leading to increase lifespan. The chain is Heterogeneous nuclear ribonucleoprotein A1 from Caenorhabditis elegans.